A 1886-amino-acid polypeptide reads, in one-letter code: Polyprotein P3 (1886 aa).

Disordered regions lie at residues 1–24, 420–466, and 478–529; these read MATRRLPAVTQTDGSRTATESGVP, RCDS…MQDD, and RMKK…NQPE. Residues 9-20 show a composition bias toward polar residues; the sequence is VTQTDGSRTATE. Residues 488–498 are compositionally biased toward low complexity; it reads QQALSSQAQEE. The segment at 879–896 adopts a CCHC-type zinc-finger fold; sequence CKCYICGQEGHYANQCRN. A Peptidase A2 domain is found at 1215-1292; the sequence is INAIVDTGAT…GLSPGIQMII (78 aa). D1220 (for protease activity) is an active-site residue. The Reverse transcriptase domain maps to 1425–1615; that stretch reads LLQMKVIRPS…PEIDFLGASL (191 aa). In terms of domain architecture, RNase H type-1 spans 1706–1841; the sequence is KDSFIIIETD…ADALSRMINF (136 aa). 4 residues coordinate Mg(2+): D1715, E1758, D1784, and D1833.

Polyprotein P3 is presumably proteolytically cleaved into several chains by viral protease.

It carries out the reaction Endonucleolytic cleavage to 5'-phosphomonoester.. It catalyses the reaction DNA(n) + a 2'-deoxyribonucleoside 5'-triphosphate = DNA(n+1) + diphosphate. Its function is as follows. Capsid protein self assembles to form a bacilliform capsid about 90-900 nm in length. The capsid encapsulates the genomic dsDNA. Following virus entry into host cell, provides nuclear import of the viral genome. Virus particles do not enter the nucleus, but are targeted to the nuclear membrane through the interaction with host importins. This Commelina yellow mottle virus (CoYMV) protein is Polyprotein P3.